Consider the following 317-residue polypeptide: Glutathione synthetase (317 aa).

The ATP-grasp domain occupies 126 to 311 (KFFATQFTQC…IGDKLMDAIA (186 aa)). An ATP-binding site is contributed by 152–208 (AAEHRDIILKPLDGMGGSSIFRHREGDPNLSVILETLTQHGSQQIMAQRYLPEIKDG). Glu282 and Asn284 together coordinate Mg(2+).

This sequence belongs to the prokaryotic GSH synthase family. The cofactor is Mg(2+). It depends on Mn(2+) as a cofactor.

It catalyses the reaction gamma-L-glutamyl-L-cysteine + glycine + ATP = glutathione + ADP + phosphate + H(+). It functions in the pathway sulfur metabolism; glutathione biosynthesis; glutathione from L-cysteine and L-glutamate: step 2/2. The chain is Glutathione synthetase from Pseudomonas aeruginosa (strain ATCC 15692 / DSM 22644 / CIP 104116 / JCM 14847 / LMG 12228 / 1C / PRS 101 / PAO1).